The chain runs to 591 residues: L-fucose isomerase (591 aa).

Residues Glu338 and Asp362 each act as proton acceptor in the active site. 3 residues coordinate Mn(2+): Glu338, Asp362, and His529.

The protein belongs to the L-fucose isomerase family. The cofactor is Mn(2+).

It localises to the cytoplasm. It carries out the reaction L-fucose = L-fuculose. Its pathway is carbohydrate degradation; L-fucose degradation; L-lactaldehyde and glycerone phosphate from L-fucose: step 1/3. Converts the aldose L-fucose into the corresponding ketose L-fuculose. The protein is L-fucose isomerase of Phocaeicola vulgatus (strain ATCC 8482 / DSM 1447 / JCM 5826 / CCUG 4940 / NBRC 14291 / NCTC 11154) (Bacteroides vulgatus).